The primary structure comprises 122 residues: Large ribosomal subunit protein uL14 (122 aa).

Belongs to the universal ribosomal protein uL14 family. Part of the 50S ribosomal subunit. Forms a cluster with proteins L3 and L19. In the 70S ribosome, L14 and L19 interact and together make contacts with the 16S rRNA in bridges B5 and B8.

Functionally, binds to 23S rRNA. Forms part of two intersubunit bridges in the 70S ribosome. The protein is Large ribosomal subunit protein uL14 of Azoarcus sp. (strain BH72).